The primary structure comprises 189 residues: Peptidyl-tRNA hydrolase (189 aa).

A tRNA-binding site is contributed by Y14. The active-site Proton acceptor is the H19. 3 residues coordinate tRNA: F61, N63, and N109.

It belongs to the PTH family. In terms of assembly, monomer.

It localises to the cytoplasm. The enzyme catalyses an N-acyl-L-alpha-aminoacyl-tRNA + H2O = an N-acyl-L-amino acid + a tRNA + H(+). Its function is as follows. Hydrolyzes ribosome-free peptidyl-tRNAs (with 1 or more amino acids incorporated), which drop off the ribosome during protein synthesis, or as a result of ribosome stalling. In terms of biological role, catalyzes the release of premature peptidyl moieties from peptidyl-tRNA molecules trapped in stalled 50S ribosomal subunits, and thus maintains levels of free tRNAs and 50S ribosomes. This chain is Peptidyl-tRNA hydrolase, found in Sulfurovum sp. (strain NBC37-1).